A 292-amino-acid polypeptide reads, in one-letter code: Small ribosomal subunit protein uS2 (292 aa).

A disordered region spans residues 265–292; sequence TETALDWSDEPVAGDWAAEPAADAQGGW. Positions 277 to 292 are enriched in low complexity; it reads AGDWAAEPAADAQGGW.

The protein belongs to the universal ribosomal protein uS2 family. As to quaternary structure, component of the small ribosomal subunit. Mature ribosomes consist of a small (40S) and a large (60S) subunit. The 40S subunit contains about 33 different proteins and 1 molecule of RNA (18S). The 60S subunit contains about 49 different proteins and 3 molecules of RNA (25S, 5.8S and 5S). Interacts with RPS21.

It is found in the cytoplasm. In terms of biological role, required for the assembly and/or stability of the 40S ribosomal subunit. Required for the processing of the 20S rRNA-precursor to mature 18S rRNA in a late step of the maturation of 40S ribosomal subunits. The protein is Small ribosomal subunit protein uS2 of Cryptococcus neoformans var. neoformans serotype D (strain B-3501A) (Filobasidiella neoformans).